A 2150-amino-acid polypeptide reads, in one-letter code: A disintegrin and metalloproteinase with thrombospondin motifs gon-1 (2150 aa).

The first 28 residues, 1-28 (MRSIGGSFHLLQPVVAALILLVVCLVYA), serve as a signal peptide directing secretion. Positions 29 to 273 (LQSGSGTISE…VIERKARSRR (245 aa)) are excised as a propeptide. Asn134, Asn213, Asn243, and Asn248 each carry an N-linked (GlcNAc...) asparagine glycan. Residues 280-493 (HYVEVLVVAD…GQTQCLFDQP (214 aa)) form the Peptidase M12B domain. Disulfide bonds link Cys402/Cys488 and Cys440/Cys470. His424 provides a ligand contact to Zn(2+). Glu425 is an active-site residue. 2 residues coordinate Zn(2+): His428 and His434. Residues 503-587 (FVRDEPGKKY…RLAPESLTKI (85 aa)) form the Disintegrin domain. Positions 588 to 643 (DGQWGDWRSWGECSRTCGGGVQKGLRDCDSPKPRNGGKYCVGQRERYRSCNTQECP) constitute a TSP type-1 1 domain. Intrachain disulfides connect Cys600/Cys637, Cys604/Cys642, and Cys615/Cys627. An N-linked (GlcNAc...) asparagine glycan is attached at Asn842. 11 TSP type-1 domains span residues 943-1003 (CSTR…IDCS), 1004-1057 (GRKW…RECN), 1060-1115 (PCPR…HACT), 1116-1165 (WWQF…KPCH), 1168-1227 (SCPK…GTCP), 1228-1277 (FWRN…QTCH), 1280-1339 (PCTS…DTCD), 1352-1409 (PPIR…RDCS), 1410-1469 (YWKM…EPCP), 1474-1524 (HIGS…ELCP), and 1527-1585 (TNNS…PPCR). N-linked (GlcNAc...) asparagine glycosylation is found at Asn1139 and Asn1199. 2 N-linked (GlcNAc...) asparagine glycosylation sites follow: Asn1370 and Asn1432. 4 N-linked (GlcNAc...) asparagine glycosylation sites follow: Asn1528, Asn1590, Asn1606, and Asn1654. A disordered region spans residues 1590–1614 (NKTSSASMTSLSSSNSNTTSSASAS). Residues 1592-1614 (TSSASMTSLSSSNSNTTSSASAS) are compositionally biased toward low complexity. TSP type-1 domains lie at 1621–1675 (PVVS…VRCR), 1678–1736 (HCPR…VACP), 1737–1793 (AYRW…DTSN), 1794–1866 (CPYE…NPCD), and 1867–1924 (SEFK…RNCL). 6 disulfide bridges follow: Cys1679–Cys1718, Cys1690–Cys1694, Cys1690–Cys1730, Cys1694–Cys1735, Cys1705–Cys1718, and Cys1730–Cys1735. N-linked (GlcNAc...) asparagine glycosylation is found at Asn1828 and Asn1855. In terms of domain architecture, GON spans 1924 to 2123 (LPSTCQELKS…RYKGLIFEVN (200 aa)). 3 N-linked (GlcNAc...) asparagine glycosylation sites follow: Asn1942, Asn1960, and Asn1997.

Zn(2+) is required as a cofactor. Expressed by the gonadal distal tip cells (DTCs). Expressed in muscles, including body wall, vulval and anal depressor muscles. Expressed in motor neurons and in ASI and ASJ neurons.

Its subcellular location is the secreted. It localises to the extracellular space. The protein localises to the extracellular matrix. The protein resides in the basement membrane. It is found in the endoplasmic reticulum. Its subcellular location is the golgi apparatus. Its function is as follows. Secreted metalloprotease required for distal tip cell (DTC) migration along the body wall basement membranes, a key step that promotes gonad morphogenesis. Probably acts by remodeling the basement membrane during cell migration. Required to restrict presynaptic growth at the neuromuscular junctions (NMJ) in late larval stage and in adult motor neurons, probably by controlling collagen IV emb-9 degradation, a component of the synapse basement membrane. Also involved in the organization of adult muscle morphology. Has a protease-independent function in promoting the transport from the endoplasmic reticulum to the Golgi apparatus of a variety of secretory cargos. Required for the secretion of insulin-like peptide ins-7, daf-28 and ins-18 and TGF beta-like protein daf-7. In peripheral tissues, negatively regulates insulin-mediated daf-16 translocation and thereby negatively regulates lifespan and dauer formation. The protein is A disintegrin and metalloproteinase with thrombospondin motifs gon-1 of Caenorhabditis elegans.